The sequence spans 230 residues: uncharacterized protein (230 aa).

Residues 1–18 form the signal peptide; sequence MRQYTSKSILFMTAIALS.

This is an uncharacterized protein from Pasteurella multocida (strain Pm70).